A 226-amino-acid chain; its full sequence is Enolase-phosphatase E1 (226 aa).

It belongs to the HAD-like hydrolase superfamily. MasA/MtnC family. In terms of assembly, monomer. Mg(2+) is required as a cofactor.

It carries out the reaction 5-methylsulfanyl-2,3-dioxopentyl phosphate + H2O = 1,2-dihydroxy-5-(methylsulfanyl)pent-1-en-3-one + phosphate. The protein operates within amino-acid biosynthesis; L-methionine biosynthesis via salvage pathway; L-methionine from S-methyl-5-thio-alpha-D-ribose 1-phosphate: step 3/6. Its pathway is amino-acid biosynthesis; L-methionine biosynthesis via salvage pathway; L-methionine from S-methyl-5-thio-alpha-D-ribose 1-phosphate: step 4/6. In terms of biological role, bifunctional enzyme that catalyzes the enolization of 2,3-diketo-5-methylthiopentyl-1-phosphate (DK-MTP-1-P) into the intermediate 2-hydroxy-3-keto-5-methylthiopentenyl-1-phosphate (HK-MTPenyl-1-P), which is then dephosphorylated to form the acireductone 1,2-dihydroxy-3-keto-5-methylthiopentene (DHK-MTPene). The polypeptide is Enolase-phosphatase E1 (Shewanella baltica (strain OS195)).